We begin with the raw amino-acid sequence, 331 residues long: Biotin synthase (331 aa).

The Radical SAM core domain occupies 52-277; that stretch reads PEVEVEGIVS…RTILRYAGGR (226 aa). Residues Cys-67, Cys-71, and Cys-74 each coordinate [4Fe-4S] cluster. [2Fe-2S] cluster-binding residues include Cys-110, Cys-202, and Arg-272.

It belongs to the radical SAM superfamily. Biotin synthase family. Homodimer. Requires [4Fe-4S] cluster as cofactor. [2Fe-2S] cluster is required as a cofactor.

It carries out the reaction (4R,5S)-dethiobiotin + (sulfur carrier)-SH + 2 reduced [2Fe-2S]-[ferredoxin] + 2 S-adenosyl-L-methionine = (sulfur carrier)-H + biotin + 2 5'-deoxyadenosine + 2 L-methionine + 2 oxidized [2Fe-2S]-[ferredoxin]. The protein operates within cofactor biosynthesis; biotin biosynthesis; biotin from 7,8-diaminononanoate: step 2/2. In terms of biological role, catalyzes the conversion of dethiobiotin (DTB) to biotin by the insertion of a sulfur atom into dethiobiotin via a radical-based mechanism. The protein is Biotin synthase of Salinispora tropica (strain ATCC BAA-916 / DSM 44818 / JCM 13857 / NBRC 105044 / CNB-440).